The sequence spans 193 residues: Thymidine kinase (193 aa).

Residues 15–22 (GCMYSGKT) and 87–90 (DELH) contribute to the ATP site. The active-site Proton acceptor is the Glu88. Cys147, Cys150, Cys185, and Cys188 together coordinate Zn(2+).

The protein belongs to the thymidine kinase family. In terms of assembly, homotetramer.

It localises to the cytoplasm. The enzyme catalyses thymidine + ATP = dTMP + ADP + H(+). In Chloroflexus aurantiacus (strain ATCC 29366 / DSM 635 / J-10-fl), this protein is Thymidine kinase.